Consider the following 481-residue polypeptide: Glutamate mutase epsilon subunit (481 aa).

Arginine 67 is an L-glutamate binding site. Glycine 69 is an adenosylcob(III)alamin binding site. Arginine 99 lines the L-glutamate pocket. Asparagine 122 contributes to the adenosylcob(III)alamin binding site. L-glutamate-binding positions include arginine 148 to histidine 149, glutamate 170, and tyrosine 176. Proline 179 lines the adenosylcob(III)alamin pocket. An L-glutamate-binding site is contributed by tyrosine 180. Residues phenylalanine 296, lysine 325, glutamate 329, and isoleucine 333 each coordinate adenosylcob(III)alamin.

It belongs to the methylaspartate mutase GlmE subunit family. In terms of assembly, heterotetramer composed of 2 epsilon subunits (GlmE) and 2 sigma subunits (GlmS). GlmE exists as a homodimer and GlmS as a monomer. Adenosylcob(III)alamin serves as cofactor.

The enzyme catalyses (2S,3S)-3-methyl-L-aspartate = L-glutamate. It participates in amino-acid degradation; L-glutamate degradation via mesaconate pathway; acetate and pyruvate from L-glutamate: step 1/4. Functionally, catalyzes the carbon skeleton rearrangement of L-glutamate to L-threo-3-methylaspartate ((2S,3S)-3-methylaspartate). The protein is Glutamate mutase epsilon subunit of Escherichia coli O157:H7.